Reading from the N-terminus, the 499-residue chain is MEIHIPSLVLCISFFIFFKIVSKLKTKTSNRKHLPLPPGPWKLPLIGNLHNLVGALPHHTLRRLSRKFGPMMSLQLGELSAVIISSADAAKEIMKTHDLNFASRPQVAAADIIGYGSTNITFSPYGGHWRQLRKICTLELLSAKRVQSFRPLRERVFVDLCRRFADHGSSAVNFSEEFMSATYTLISRAVLGEEAEQHEGLLPNVKEMPELTAGFDISEVFPSVGLFKVMSRLRKRIVAVHKDTDRILDDVIHQHRAAKSEEHKDLLDVLLQLQEDGLELPLTDENIKSVLVDMLVAGSETSSTVIEWAMAEMLKNPRILEKAQEEVRRVFDKEGTVDESHIHELKYLKSVVKETLRVHPPAPLILPRICGETCEINGYEIPAETKIIVNAWAVNRDPKYWEDSDCFKPERFLDNLVDFRGNHFQYIPFGAGRRMCPGIGFGLANVELPLAMFMYHFDWELDGGMKPQDLDMEEKFGASAKKLKDLFLIPAIKRTLPTK.

Residues 4 to 24 traverse the membrane as a helical segment; it reads HIPSLVLCISFFIFFKIVSKL. Cys436 lines the heme pocket.

Belongs to the cytochrome P450 family. The cofactor is heme. In terms of tissue distribution, expressed in leaf glandular trichomes.

It localises to the membrane. The enzyme catalyses ferruginol + reduced [NADPH--hemoprotein reductase] + O2 = salviol + oxidized [NADPH--hemoprotein reductase] + H2O + H(+). The protein operates within secondary metabolite biosynthesis; terpenoid biosynthesis. Its function is as follows. Monooxygenase involved in the biosynthesis of labdane-related diterpenes natural products. Catalyzes the oxidation of ferruginol to produce salviol. Salviol is an intermediate in the biosynthesis of carnosate, a potent antioxidant. This is Salviol synthase from Salvia pomifera (Apple sage).